Reading from the N-terminus, the 32-residue chain is Conotoxin Cltx-4 (32 aa).

A 4-hydroxyproline mark is found at Pro2, Pro24, Pro28, and Pro30. Ser32 bears the Serine amide mark.

Post-translationally, contains 4 disulfide bonds. Expressed by the venom duct.

It localises to the secreted. This chain is Conotoxin Cltx-4, found in Californiconus californicus (California cone).